Reading from the N-terminus, the 159-residue chain is Transcriptional repressor NrdR (159 aa).

Positions 1–21 (MRCPKCQHNKSNVIDSRQAED) are disordered. The segment at 3-34 (CPKCQHNKSNVIDSRQAEDGNTIRRRRECDAC) is a zinc-finger region. In terms of domain architecture, ATP-cone spans 49 to 139 (LLVVKKDGTR…VYRSFKDVDE (91 aa)).

It belongs to the NrdR family. Zn(2+) is required as a cofactor.

Negatively regulates transcription of bacterial ribonucleotide reductase nrd genes and operons by binding to NrdR-boxes. This Streptococcus thermophilus (strain ATCC BAA-491 / LMD-9) protein is Transcriptional repressor NrdR.